The primary structure comprises 416 residues: Cysteate synthase (416 aa).

The residue at position 104 (lysine 104) is an N6-(pyridoxal phosphate)lysine. Residue asparagine 130 coordinates pyridoxal 5'-phosphate.

It belongs to the threonine synthase family. Cysteate synthase subfamily. As to quaternary structure, homotrimer. Requires pyridoxal 5'-phosphate as cofactor.

It catalyses the reaction O-phospho-L-serine + sulfite + H(+) = L-cysteate + phosphate. The protein operates within cofactor biosynthesis; coenzyme M biosynthesis. Its function is as follows. Specifically catalyzes the beta-elimination of phosphate from L-phosphoserine and the beta-addition of sulfite to the dehydroalanine intermediate to produce L-cysteate. The chain is Cysteate synthase from Methanosarcina barkeri (strain Fusaro / DSM 804).